A 73-amino-acid chain; its full sequence is Conotoxin CnIIIF (73 aa).

The N-terminal stretch at Met1–Ala19 is a signal peptide. Positions Leu20–Arg51 are excised as a propeptide. Intrachain disulfides connect Cys53/Cys72, Cys54/Cys70, and Cys60/Cys73.

Belongs to the conotoxin M superfamily. As to expression, expressed by the venom duct.

It localises to the secreted. Shows a paralytic effect in fish. The chain is Conotoxin CnIIIF from Conus consors (Singed cone).